Reading from the N-terminus, the 191-residue chain is Potassium-transporting ATPase KdpC subunit (191 aa).

A helical transmembrane segment spans residues 6-26 (PALVLFILLTLLTGGVYPLLT).

This sequence belongs to the KdpC family. As to quaternary structure, the system is composed of three essential subunits: KdpA, KdpB and KdpC.

The protein resides in the cell inner membrane. In terms of biological role, part of the high-affinity ATP-driven potassium transport (or Kdp) system, which catalyzes the hydrolysis of ATP coupled with the electrogenic transport of potassium into the cytoplasm. This subunit acts as a catalytic chaperone that increases the ATP-binding affinity of the ATP-hydrolyzing subunit KdpB by the formation of a transient KdpB/KdpC/ATP ternary complex. The chain is Potassium-transporting ATPase KdpC subunit from Klebsiella pneumoniae subsp. pneumoniae (strain ATCC 700721 / MGH 78578).